Reading from the N-terminus, the 288-residue chain is Ninja-family protein 6 (288 aa).

2 disordered regions span residues 1 to 50 and 66 to 207; these read MASR…KRPR and LHAD…TRTG. Residues 12–23 are compositionally biased toward gly residues; the sequence is AGEGAGPPGDAG. A compositionally biased stretch (low complexity) spans 76-86; the sequence is LPLLRTTSLPT. A compositionally biased stretch (basic and acidic residues) spans 91-103; sequence ERWRRREMQSRRR. Residues 131-173 show a composition bias toward polar residues; that stretch reads RRSNASQGSNSASTTEQGIGGSMFNQSADAKSPSTSDNRNQND. The span at 195-207 shows a compositional bias: low complexity; the sequence is RLRTLGSLTTRTG.

The protein belongs to the Ninja family.

It is found in the nucleus. The sequence is that of Ninja-family protein 6 from Zea mays (Maize).